An 88-amino-acid polypeptide reads, in one-letter code: Acylphosphatase (88 aa).

Residues 3–88 form the Acylphosphatase-like domain; the sequence is AARFIFTGVV…IPTTEAFVTG (86 aa). Catalysis depends on residues Arg-18 and Asn-36.

This sequence belongs to the acylphosphatase family.

It carries out the reaction an acyl phosphate + H2O = a carboxylate + phosphate + H(+). This is Acylphosphatase (acyP) from Xanthomonas campestris pv. campestris (strain 8004).